The chain runs to 1059 residues: RNA-binding protein 26 (1059 aa).

2 stretches are compositionally biased toward basic and acidic residues: residues 98–114 (EKEIKKDEVNKEEEKEK) and 130–147 (RHKDTRENRKRSNSDRES). Residues 98 to 275 (EKEIKKDEVN…PVDNSYASGS (178 aa)) are disordered. Over residues 172 to 182 (LNSNKVQNAKN) the composition is skewed to polar residues. Positions 184–213 (RSRDDRKRDDRFRKREYDRNVPRRDSYRDR) are enriched in basic and acidic residues. The segment covering 214-231 (YNRRRGRSRSYSRSRSRS) has biased composition (basic residues). The span at 232–266 (WSKERQRDRDRSRSRTRSRDKDSGKPKFDLDRPDP) shows a compositional bias: basic and acidic residues. A C3H1-type zinc finger spans residues 327-355 (QMQKKRCRDYDEKGFCMRGDMCPFDHGSD). The span at 375–428 (PVLEGPPPPGLPPPPSLLTPPPVNLQPPPVPPPGPLPPSLPPVTGPPPPLPPLQ) shows a compositional bias: pro residues. The interval 375–443 (PVLEGPPPPG…APPNSATSSV (69 aa)) is disordered. A compositionally biased stretch (low complexity) spans 434 to 443 (APPNSATSSV). Residues 581 to 655 (TKLELRRIPP…RFIRMYWHRE (75 aa)) enclose the RRM 1 domain. Residues 771–873 (GDAQKKKQEA…LLDTELDLYN (103 aa)) are a coiled coil. The RRM 2 domain occupies 942–1011 (RALKISGFTE…QDLKLAWNKP (70 aa)). Residues 1010–1059 (KPVPNASSTEVEDADQEEEEFHEDSIVDDSLLQDDDEEEEDDNESRSWRR) form a disordered region. Acidic residues-rich tracts occupy residues 1019-1031 (EVEDADQEEEEFH) and 1040-1052 (LLQDDDEEEEDDN).

Its function is as follows. May be involved in the turnover of nuclear polyadenylated (pA+) RNA. The chain is RNA-binding protein 26 from Xenopus laevis (African clawed frog).